Consider the following 896-residue polypeptide: Isoleucine--tRNA ligase (896 aa).

The 'HIGH' region motif lies at 57–67 (PYANNNIHIGH). E543 is an L-isoleucyl-5'-AMP binding site. The 'KMSKS' region signature appears at 584-588 (KMSKS). Position 587 (K587) interacts with ATP. Zn(2+) is bound by residues C869, C872, C885, and C888.

It belongs to the class-I aminoacyl-tRNA synthetase family. IleS type 1 subfamily. In terms of assembly, monomer. Zn(2+) serves as cofactor.

It localises to the cytoplasm. It carries out the reaction tRNA(Ile) + L-isoleucine + ATP = L-isoleucyl-tRNA(Ile) + AMP + diphosphate. Its function is as follows. Catalyzes the attachment of isoleucine to tRNA(Ile). As IleRS can inadvertently accommodate and process structurally similar amino acids such as valine, to avoid such errors it has two additional distinct tRNA(Ile)-dependent editing activities. One activity is designated as 'pretransfer' editing and involves the hydrolysis of activated Val-AMP. The other activity is designated 'posttransfer' editing and involves deacylation of mischarged Val-tRNA(Ile). This Acholeplasma laidlawii (strain PG-8A) protein is Isoleucine--tRNA ligase.